Consider the following 499-residue polypeptide: MDNMNHEELNDQLLVRREKLHNLREQGIDPFGKRFERTNATNDLLSLYGEFSKEELEEKEISVSIAGRIMTKRGKGKAGFAHIQDLHGQVQIYVRKDAVGDEEYELFKTADLGDLVGIEGKVFKTNVGELSVKATGFTLLTKSLRPLPDKYHGLKDVEQRYRQRYLDLITSMESRETFVTRSKIIREMRRYLDDNGYLEVETPMMHAIAGGASARPFITHHNALDMELYMRIAIELHLKRLIVGGLEKVYEIGRVFRNEGVSTRHNPEFTMIELYEAYADYKDIMKLTENMVAHIAKQVLGTTTIQYGDYEINLEPEWTRLHMVDAIKEHSGADFWNPMSVEEARELAKEHNVEIKDTMEVGHIINEFFEQKVEDKLIQPTFIYGHPVEISPLAKKNDEDPRFTDRFELFIVAREHANAFTELNDPIDQKERFEAQLKEREQGNDEAHMMDDDYIEALEYGMPPTGGLGIGIDRLVMLLTNAPSIRDVLLFPAMRHKQD.

The Mg(2+) site is built by Glu408 and Glu415.

It belongs to the class-II aminoacyl-tRNA synthetase family. In terms of assembly, homodimer. Mg(2+) serves as cofactor.

Its subcellular location is the cytoplasm. The catalysed reaction is tRNA(Lys) + L-lysine + ATP = L-lysyl-tRNA(Lys) + AMP + diphosphate. This is Lysine--tRNA ligase from Bacillus thuringiensis (strain Al Hakam).